Consider the following 473-residue polypeptide: Photosystem II CP43 reaction center protein (473 aa).

The propeptide occupies 1-14; that stretch reads MKILYSPRRFYPVE. An N-acetylthreonine modification is found at Thr15. Position 15 is a phosphothreonine (Thr15). 5 consecutive transmembrane segments (helical) span residues 69 to 93, 134 to 155, 178 to 200, 255 to 275, and 291 to 312; these read LFEVAHFVPEKPMYEQGLILLPHLA, IIGPETLEESFPFFGYAWKDKN, KALYFGGVYDTWAPGGGDVRKIT, KPFAWARRAFVWSGEAYLSYS, and WFNNTAYPSEFYGPTGPEASQA. Glu367 is a [CaMn4O5] cluster binding site. The helical transmembrane segment at 447–471 threads the bilayer; the sequence is RARAAAAGFEKGIDRDFEPVLSTTP.

Belongs to the PsbB/PsbC family. PsbC subfamily. As to quaternary structure, PSII is composed of 1 copy each of membrane proteins PsbA, PsbB, PsbC, PsbD, PsbE, PsbF, PsbH, PsbI, PsbJ, PsbK, PsbL, PsbM, PsbT, PsbX, PsbY, PsbZ, Psb30/Ycf12, at least 3 peripheral proteins of the oxygen-evolving complex and a large number of cofactors. It forms dimeric complexes. Requires Binds multiple chlorophylls and provides some of the ligands for the Ca-4Mn-5O cluster of the oxygen-evolving complex. It may also provide a ligand for a Cl- that is required for oxygen evolution. PSII binds additional chlorophylls, carotenoids and specific lipids. as cofactor.

It localises to the plastid. It is found in the chloroplast thylakoid membrane. In terms of biological role, one of the components of the core complex of photosystem II (PSII). It binds chlorophyll and helps catalyze the primary light-induced photochemical processes of PSII. PSII is a light-driven water:plastoquinone oxidoreductase, using light energy to abstract electrons from H(2)O, generating O(2) and a proton gradient subsequently used for ATP formation. The chain is Photosystem II CP43 reaction center protein from Huperzia lucidula (Shining clubmoss).